A 327-amino-acid chain; its full sequence is Ribosomal RNA large subunit methyltransferase F (327 aa).

The protein belongs to the methyltransferase superfamily. METTL16/RlmF family.

The protein resides in the cytoplasm. It catalyses the reaction adenosine(1618) in 23S rRNA + S-adenosyl-L-methionine = N(6)-methyladenosine(1618) in 23S rRNA + S-adenosyl-L-homocysteine + H(+). Specifically methylates the adenine in position 1618 of 23S rRNA. The polypeptide is Ribosomal RNA large subunit methyltransferase F (Marinomonas sp. (strain MWYL1)).